Consider the following 387-residue polypeptide: Mannitol-1-phosphate 5-dehydrogenase (387 aa).

3 to 14 is an NAD(+) binding site; that stretch reads ALHFGAGNIGRG.

It belongs to the mannitol dehydrogenase family.

The enzyme catalyses D-mannitol 1-phosphate + NAD(+) = beta-D-fructose 6-phosphate + NADH + H(+). The sequence is that of Mannitol-1-phosphate 5-dehydrogenase from Yersinia pseudotuberculosis serotype O:1b (strain IP 31758).